Reading from the N-terminus, the 987-residue chain is Ras guanine nucleotide exchange factor efc25 (987 aa).

The segment covering 1-10 (MRRPNLDRLR) has biased composition (basic and acidic residues). 3 disordered regions span residues 1–50 (MRRP…STMS), 100–130 (FSST…PEIR), and 529–552 (NANT…ISRS). Residues 19-39 (TSVSKPSTPSYSTYSLSPTFS) show a composition bias toward low complexity. Polar residues-rich tracts occupy residues 40–50 (DKSVLSPSTMS), 102–111 (STHSLTRQPS), and 540–552 (RQTN…ISRS). At S552 the chain carries Phosphoserine. Residues 590 to 723 (SDNNVKGGTL…VILSEIDNLW (134 aa)) enclose the N-terminal Ras-GEF domain. One can recognise a Ras-GEF domain in the interval 752-985 (TPEEFASQMT…FDKSLSLEPR (234 aa)).

The protein resides in the cytoplasm. Has a role in chromosome segregation and cell morphology upstream of the ras1-scd1 pathway. Promotes the exchange of ras1-bound GDP by GTP leading to its activation. This Schizosaccharomyces pombe (strain 972 / ATCC 24843) (Fission yeast) protein is Ras guanine nucleotide exchange factor efc25 (efc25).